The chain runs to 89 residues: Large ribosomal subunit protein eL43 (89 aa).

The tract at residues 1–28 (MVKKSKVGSTGRFGARYGRKAKRTVKDI) is disordered. Residues 38 to 59 (CPKCDRPGVKRTHAGIWKCRKC) form a C4-type zinc finger.

This sequence belongs to the eukaryotic ribosomal protein eL43 family. Zn(2+) serves as cofactor.

This chain is Large ribosomal subunit protein eL43, found in Methanosphaera stadtmanae (strain ATCC 43021 / DSM 3091 / JCM 11832 / MCB-3).